A 354-amino-acid chain; its full sequence is S-adenosylmethionine:tRNA ribosyltransferase-isomerase (354 aa).

The protein belongs to the QueA family. Monomer.

It localises to the cytoplasm. The catalysed reaction is 7-aminomethyl-7-carbaguanosine(34) in tRNA + S-adenosyl-L-methionine = epoxyqueuosine(34) in tRNA + adenine + L-methionine + 2 H(+). Its pathway is tRNA modification; tRNA-queuosine biosynthesis. Its function is as follows. Transfers and isomerizes the ribose moiety from AdoMet to the 7-aminomethyl group of 7-deazaguanine (preQ1-tRNA) to give epoxyqueuosine (oQ-tRNA). In Salmonella dublin (strain CT_02021853), this protein is S-adenosylmethionine:tRNA ribosyltransferase-isomerase.